We begin with the raw amino-acid sequence, 302 residues long: UDP-N-acetylenolpyruvoylglucosamine reductase (302 aa).

Residues 32-195 (LGGPADLLAR…VTVTLELVPD (164 aa)) form the FAD-binding PCMH-type domain. Residue Arg175 is part of the active site. Residue Ser224 is the Proton donor of the active site. Glu294 is an active-site residue.

The protein belongs to the MurB family. Requires FAD as cofactor.

It localises to the cytoplasm. It catalyses the reaction UDP-N-acetyl-alpha-D-muramate + NADP(+) = UDP-N-acetyl-3-O-(1-carboxyvinyl)-alpha-D-glucosamine + NADPH + H(+). It participates in cell wall biogenesis; peptidoglycan biosynthesis. Functionally, cell wall formation. The chain is UDP-N-acetylenolpyruvoylglucosamine reductase from Moorella thermoacetica (strain ATCC 39073 / JCM 9320).